Reading from the N-terminus, the 723-residue chain is Multiple organellar RNA editing factor 4, mitochondrial (723 aa).

A mitochondrion-targeting transit peptide spans 1–64 (MAMFSHRLRR…RLFSTTQYQY (64 aa)). Disordered stretches follow at residues 180–303 (ITPG…GQTQ), 318–474 (RQEM…EGQP), and 663–723 (QNGG…NSRI). A compositionally biased stretch (basic and acidic residues) spans 191 to 204 (EGFDSLKKESKPEQ). Polar residues-rich tracts occupy residues 219-233 (TSGQ…TLPD), 273-303 (GQWQ…GQTQ), 327-365 (GQAQ…QGAQ), and 373-430 (QGAQ…NYSP). 2 stretches are compositionally biased toward low complexity: residues 459–474 (QGQG…EGQP) and 682–695 (QGFS…TFQQ). Over residues 714 to 723 (TETRKPNSRI) the composition is skewed to basic and acidic residues.

Belongs to the MORF family. Heterodimers with MORF8/RIP1, MORF1/RIP8 and MORF3/RIP3.

The protein resides in the mitochondrion. Its function is as follows. Involved in organellar RNA editing. Required for the processing of few RNA editing site in mitochondria. In Arabidopsis thaliana (Mouse-ear cress), this protein is Multiple organellar RNA editing factor 4, mitochondrial.